A 532-amino-acid chain; its full sequence is FRIGIDA-like protein 4a (532 aa).

The tract at residues 406-432 is disordered; it reads KTEKRKPAAVPANKRTRASYNGPMPPA.

This sequence belongs to the Frigida family. As to expression, expressed in leaves, shoot apex, flowers and during seed development.

This chain is FRIGIDA-like protein 4a (FRL4A), found in Arabidopsis thaliana (Mouse-ear cress).